The following is a 305-amino-acid chain: Putative lipid kinase SAB0675c (305 aa).

Positions 3–139 (NKYTHGVLFY…YDVIKINNQY (137 aa)) constitute a DAGKc domain. ATP-binding positions include Ser44, 74-80 (GDGTVNE), and Thr101. Residues Ser220, Asp223, and Glu225 each coordinate Mg(2+). Catalysis depends on Glu281, which acts as the Proton acceptor.

Belongs to the diacylglycerol/lipid kinase family. Requires Mg(2+) as cofactor.

In terms of biological role, may catalyze the ATP-dependent phosphorylation of lipids other than diacylglycerol (DAG). The sequence is that of Putative lipid kinase SAB0675c from Staphylococcus aureus (strain bovine RF122 / ET3-1).